A 200-amino-acid chain; its full sequence is LHFPL tetraspan subfamily member 6 protein (200 aa).

The signal sequence occupies residues 1-21; sequence MASSLTCTGVIWALLSFLCAA. 3 helical membrane-spanning segments follow: residues 84–104, 123–143, and 166–186; these read ICTIVTGLGCGLLLLVALTAL, GIQFLGGLLIGAGCALYPLGW, and IGWAYYCTGAGATAAMLLCTW.

It belongs to the LHFP family. Pancreas, kidney, skeletal muscle, liver, lung brain, heart, colon, small intestine, uterus, testis, prostate, thymus, spleen and placenta.

It localises to the membrane. The sequence is that of LHFPL tetraspan subfamily member 6 protein from Homo sapiens (Human).